A 137-amino-acid chain; its full sequence is ATP synthase epsilon chain (137 aa).

It belongs to the ATPase epsilon chain family. As to quaternary structure, F-type ATPases have 2 components, CF(1) - the catalytic core - and CF(0) - the membrane proton channel. CF(1) has five subunits: alpha(3), beta(3), gamma(1), delta(1), epsilon(1). CF(0) has three main subunits: a, b and c.

The protein resides in the cell membrane. Produces ATP from ADP in the presence of a proton gradient across the membrane. This chain is ATP synthase epsilon chain, found in Streptococcus agalactiae serotype Ia (strain ATCC 27591 / A909 / CDC SS700).